The sequence spans 398 residues: Immunoglobulin heavy constant gamma 2A (398 aa).

Ig-like domains lie at 5–97 (PSVY…KKIE), 120–219 (PSVF…RTIS), and 228–324 (PQVY…KSFS). 3 disulfides stabilise this stretch: Cys-26-Cys-81, Cys-143-Cys-203, and Cys-249-Cys-307. N-linked (GlcNAc...) asparagine glycosylation is present at Asn-179. The chain crosses the membrane as a helical span at residues 345-362 (GLWTTITIFISLFLLSVC). Topologically, residues 363–398 (YSASVTLFKVKWIFSSVVELKQTISPDYRNMIGQGA) are cytoplasmic.

The protein resides in the cell membrane. This is Immunoglobulin heavy constant gamma 2A from Mus musculus (Mouse).